A 391-amino-acid polypeptide reads, in one-letter code: Nucleosome assembly protein 1-like 1 (391 aa).

The segment covering 1–10 has biased composition (basic and acidic residues); the sequence is MADIDNKEQS. Positions 1–32 are disordered; the sequence is MADIDNKEQSELDQDLDDVEEVEEEETGEETK. N-acetylalanine is present on Ala-2. Ser-10 carries the post-translational modification Phosphoserine. The segment covering 11–28 has biased composition (acidic residues); it reads ELDQDLDDVEEVEEEETG. A phosphothreonine mark is found at Thr-62 and Thr-64. Ser-69 bears the Phosphoserine mark. An N6-acetyllysine modification is found at Lys-116. An NAP1L motif motif is present at residues 125–150; sequence YEPTEEECEWKPDEEDEISEELKEKA. A compositionally biased stretch (acidic residues) spans 132-143; sequence CEWKPDEEDEIS. Residues 132–163 are disordered; it reads CEWKPDEEDEISEELKEKAKIEDEKKDEEKED. A Phosphoserine modification is found at Ser-143. Residues 144-163 show a composition bias toward basic and acidic residues; it reads EELKEKAKIEDEKKDEEKED. A Nuclear localization signal motif is present at residues 273–279; sequence IKKKQKH. Residues 346-376 are compositionally biased toward acidic residues; the sequence is AIEDDDDDYDEEGEEADEEGEEEGDEENDPD. The tract at residues 346 to 391 is disordered; that stretch reads AIEDDDDDYDEEGEEADEEGEEEGDEENDPDYDPKKDQNPAECKQQ. A 5-glutamyl polyglycine mark is found at Glu-359 and Glu-360. The span at 377-391 shows a compositional bias: basic and acidic residues; that stretch reads YDPKKDQNPAECKQQ. Cys-388 bears the Cysteine methyl ester mark. The S-farnesyl cysteine moiety is linked to residue Cys-388. Positions 389–391 are cleaved as a propeptide — removed in mature form; that stretch reads KQQ.

Belongs to the nucleosome assembly protein (NAP) family. As to quaternary structure, homodimer. The dimer binds strongly and sequentially to single and double H2A-H2B heterodimers. Interacts with ERCC6; this interaction increases ERCC6 processivity. Interacts with RAD54. Interacts with SETD1A. Polyglycylated by TTLL10 on glutamate residues, resulting in polyglycine chains on the gamma-carboxyl group. Both polyglutamylation and polyglycylation modifications can coexist on the same protein on adjacent residues, and lowering polyglycylation levels increases polyglutamylation, and reciprocally. Post-translationally, polyglutamylated by TTLL4 on glutamate residues, resulting in polyglutamate chains on the gamma-carboxyl group. Both polyglutamylation and polyglycylation modifications can coexist on the same protein on adjacent residues, and lowering polyglycylation levels increases polyglutamylation, and reciprocally.

It is found in the nucleus. It localises to the melanosome. The protein localises to the cytoplasm. Its function is as follows. Histone chaperone that plays a role in the nuclear import of H2A-H2B and nucleosome assembly. Also participates in several important DNA repair mechanisms: greatly enhances ERCC6-mediated chromatin remodeling which is essential for transcription-coupled nucleotide excision DNA repair. Also stimulates homologous recombination (HR) by RAD51 and RAD54 which is essential in mitotic DNA double strand break (DSB) repair. Plays a key role in the regulation of embryonic neurogenesis. Promotes the proliferation of neural progenitors and inhibits neuronal differentiation during cortical development. Regulates neurogenesis via the modulation of RASSF10; regulates RASSF10 expression by promoting SETD1A-mediated H3K4 methylation at the RASSF10 promoter. This chain is Nucleosome assembly protein 1-like 1 (NAP1L1), found in Pongo abelii (Sumatran orangutan).